The chain runs to 1276 residues: Component of gems protein 5 (1276 aa).

The segment at 53–55 (NWY) is interaction with U4 snRNA. WD repeat units follow at residues 92-139 (GHTD…DDHN), 183-223 (EHKA…VFPI), 228-268 (GNNI…TVCK), 271-336 (AHSA…IESG), 364-405 (NDKQ…SPPE), 438-481 (TTKN…IKIQ), 485-522 (GFVY…KDAY), and 530-574 (GIQS…SKIF). A disordered region spans residues 138 to 157 (HNEDTEIGDDFKHGSGGGGS). The tract at residues 586–652 (IWKPPPTPTP…NSNNEQQPNK (67 aa)) is disordered. Over residues 598-646 (NINNNNNNNNNNNNNNNNNNNNNNNNNNNNNNNNNNNNINNNNNNNSNN) the composition is skewed to low complexity. WD repeat units follow at residues 688–727 (TFSK…LTRI) and 729–771 (EHKK…NQNE). A compositionally biased stretch (basic and acidic residues) spans 772–793 (NEKKIDNEKGKENENEKGKENE). The segment at 772–809 (NEKKIDNEKGKENENEKGKENENENENENENENENENE) is disordered. Positions 778–829 (NEKGKENENEKGKENENENENENENENENENENEIENIVNNNNENDTEIEIK) form a coiled coil. The segment covering 794-809 (NENENENENENENENE) has biased composition (acidic residues). 2 WD repeats span residues 863–903 (GHKN…AISN) and 906–946 (GHDG…FKTV). A disordered region spans residues 967–997 (ITEQQQQQQQPQSPIKSNPDQSNNPSLVPPI). Over residues 979–992 (SPIKSNPDQSNNPS) the composition is skewed to polar residues.

It belongs to the WD repeat gemin-5 family. Part of the core SMN complex.

It is found in the nucleus. The protein localises to the nucleoplasm. The protein resides in the gem. Its subcellular location is the cytoplasm. The SMN complex catalyzes the assembly of small nuclear ribonucleoproteins (snRNPs), the building blocks of the spliceosome, and thereby plays an important role in the splicing of cellular pre-mRNAs. Most spliceosomal snRNPs contain a common set of Sm proteins SNRPB, SNRPD1, SNRPD2, SNRPD3, SNRPE, SNRPF and SNRPG that assemble in a heptameric protein ring on the Sm site of the small nuclear RNA to form the core snRNP (Sm core). In the cytosol, the Sm proteins SNRPD1, SNRPD2, SNRPE, SNRPF and SNRPG are trapped in an inactive 6S pICln-Sm complex by the chaperone CLNS1A that controls the assembly of the core snRNP. To assemble core snRNPs, the SMN complex accepts the trapped 5Sm proteins from CLNS1A forming an intermediate. Binding of snRNA inside 5Sm ultimately triggers eviction of the SMN complex, thereby allowing binding of SNRPD3 and SNRPB to complete assembly of the core snRNP. Within the SMN complex, GEMIN5 recognizes and delivers the small nuclear RNAs (snRNAs) to the SMN complex. Binds to the 7-methylguanosine cap of RNA molecules. This chain is Component of gems protein 5 (gemin5), found in Dictyostelium discoideum (Social amoeba).